A 320-amino-acid polypeptide reads, in one-letter code: Non-structural protein 5 (320 aa).

In Lymantria dispar (Gypsy moth), this protein is Non-structural protein 5 (S9).